Consider the following 185-residue polypeptide: Ribosome-recycling factor (185 aa).

It belongs to the RRF family.

The protein localises to the cytoplasm. Responsible for the release of ribosomes from messenger RNA at the termination of protein biosynthesis. May increase the efficiency of translation by recycling ribosomes from one round of translation to another. The protein is Ribosome-recycling factor of Alkaliphilus oremlandii (strain OhILAs) (Clostridium oremlandii (strain OhILAs)).